The chain runs to 71 residues: 8.6 kDa protein (71 aa).

The protein is 8.6 kDa protein of Pseudomonas phage Pf1 (Bacteriophage Pf1).